The chain runs to 203 residues: High frequency lysogenization protein HflD homolog (203 aa).

Belongs to the HflD family.

It is found in the cytoplasm. The protein localises to the cell inner membrane. This chain is High frequency lysogenization protein HflD homolog, found in Aeromonas salmonicida (strain A449).